The following is a 393-amino-acid chain: Formate-dependent phosphoribosylglycinamide formyltransferase (393 aa).

N(1)-(5-phospho-beta-D-ribosyl)glycinamide-binding positions include 22-23 and Glu82; that span reads EL. Residues Arg114, Lys155, 160–165, 195–198, and Glu203 each bind ATP; these read SSGKGQ and EGLV. Residues 119 to 308 enclose the ATP-grasp domain; the sequence is RLAAETLQLP…EFALHVRAFL (190 aa). Mg(2+)-binding residues include Glu267 and Glu279. Residues Asp286, Lys355, and 362-363 contribute to the N(1)-(5-phospho-beta-D-ribosyl)glycinamide site; that span reads RR.

It belongs to the PurK/PurT family. Homodimer.

The catalysed reaction is N(1)-(5-phospho-beta-D-ribosyl)glycinamide + formate + ATP = N(2)-formyl-N(1)-(5-phospho-beta-D-ribosyl)glycinamide + ADP + phosphate + H(+). It participates in purine metabolism; IMP biosynthesis via de novo pathway; N(2)-formyl-N(1)-(5-phospho-D-ribosyl)glycinamide from N(1)-(5-phospho-D-ribosyl)glycinamide (formate route): step 1/1. Involved in the de novo purine biosynthesis. Catalyzes the transfer of formate to 5-phospho-ribosyl-glycinamide (GAR), producing 5-phospho-ribosyl-N-formylglycinamide (FGAR). Formate is provided by PurU via hydrolysis of 10-formyl-tetrahydrofolate. The polypeptide is Formate-dependent phosphoribosylglycinamide formyltransferase (Yersinia pseudotuberculosis serotype IB (strain PB1/+)).